The sequence spans 589 residues: C-type lectin domain family 4 member F (589 aa).

Residues 1-39 (MDGEAVRFCTDNQCVSLHPQEVDSVAMAPAAPKIPRLVQ) are Cytoplasmic-facing. The chain crosses the membrane as a helical; Signal-anchor for type II membrane protein span at residues 40-60 (ATPAFMAVTLVFSLVTLFVVV). The Extracellular portion of the chain corresponds to 61–589 (QQQTRPVPKP…TPPCPWILSN (529 aa)). Asn79, Asn113, Asn207, Asn230, Asn244, Asn312, Asn385, and Asn399 each carry an N-linked (GlcNAc...) asparagine glycan. Residues 476–589 (NGGSLYYFSS…TPPCPWILSN (114 aa)) enclose the C-type lectin domain.

The protein localises to the membrane. In terms of biological role, receptor with an affinity for galactose and fucose. Could be involved in endocytosis. This is C-type lectin domain family 4 member F (CLEC4F) from Homo sapiens (Human).